Consider the following 212-residue polypeptide: Protein-L-isoaspartate O-methyltransferase (212 aa).

The active site involves serine 60.

Belongs to the methyltransferase superfamily. L-isoaspartyl/D-aspartyl protein methyltransferase family.

The protein localises to the cytoplasm. The enzyme catalyses [protein]-L-isoaspartate + S-adenosyl-L-methionine = [protein]-L-isoaspartate alpha-methyl ester + S-adenosyl-L-homocysteine. Functionally, catalyzes the methyl esterification of L-isoaspartyl residues in peptides and proteins that result from spontaneous decomposition of normal L-aspartyl and L-asparaginyl residues. It plays a role in the repair and/or degradation of damaged proteins. This is Protein-L-isoaspartate O-methyltransferase from Methanococcus maripaludis (strain C7 / ATCC BAA-1331).